A 289-amino-acid polypeptide reads, in one-letter code: Protoheme IX farnesyltransferase (289 aa).

Transmembrane regions (helical) follow at residues Val-9 to Met-29, Leu-40 to Cys-60, Leu-89 to Trp-109, Pro-110 to Leu-130, Thr-134 to Ser-154, Ala-155 to Thr-175, Tyr-190 to Arg-209, Val-228 to Val-248, and Phe-269 to Val-289.

It belongs to the UbiA prenyltransferase family. Protoheme IX farnesyltransferase subfamily.

It localises to the cell membrane. The catalysed reaction is heme b + (2E,6E)-farnesyl diphosphate + H2O = Fe(II)-heme o + diphosphate. It functions in the pathway porphyrin-containing compound metabolism; heme O biosynthesis; heme O from protoheme: step 1/1. Functionally, converts heme B (protoheme IX) to heme O by substitution of the vinyl group on carbon 2 of heme B porphyrin ring with a hydroxyethyl farnesyl side group. The sequence is that of Protoheme IX farnesyltransferase from Frankia casuarinae (strain DSM 45818 / CECT 9043 / HFP020203 / CcI3).